The chain runs to 374 residues: Speckle-type POZ protein (374 aa).

The MATH domain maps to 31–161; the sequence is KFSYMWTINN…DDKLTLFCEV (131 aa). The segment at 71–191 is required for nuclear localization; it reads VNPKGLDEES…PDCRLADELG (121 aa). A BTB domain is found at 173 to 297; that stretch reads QNTMNMVKVP…MCEDALCTSL (125 aa). Residues 297–355 form a homodimerization region; the sequence is LSVENAAEILILADLHSADQLKTQAVDFINYHASDVMETSGWKSMVASHPHLVAEAYRS.

The protein belongs to the Tdpoz family. In terms of assembly, homodimer. Part of cullin-RING-based BCR (BTB-CUL3-RBX1) E3 ubiquitin-protein ligase complexes that contain CUL3 and SPOP, plus a target protein.

The protein localises to the nucleus. It is found in the nucleus speckle. It participates in protein modification; protein ubiquitination. In terms of biological role, component of a cullin-RING-based BCR (BTB-CUL3-RBX1) E3 ubiquitin-protein ligase complex that mediates the ubiquitination of target proteins, leading most often to their proteasomal degradation. The polypeptide is Speckle-type POZ protein (spop) (Danio rerio (Zebrafish)).